A 214-amino-acid chain; its full sequence is Ras-like protein rasZ (214 aa).

Gly-16–Thr-23 provides a ligand contact to GTP. The Effector region signature appears at Tyr-38–Tyr-46. GTP contacts are provided by residues Asp-63–Gln-67 and Asn-122–Asp-125. Cys-211 is subject to Cysteine methyl ester. Cys-211 carries the S-geranylgeranyl cysteine lipid modification. Positions Lys-212–Met-214 are cleaved as a propeptide — removed in mature form.

This sequence belongs to the small GTPase superfamily. Ras family.

Its subcellular location is the cell membrane. It carries out the reaction GTP + H2O = GDP + phosphate + H(+). Functionally, ras proteins bind GDP/GTP and possess intrinsic GTPase activity. This is Ras-like protein rasZ (rasZ) from Dictyostelium discoideum (Social amoeba).